The sequence spans 352 residues: Protein RecA (352 aa).

67-74 (GPESSGKT) provides a ligand contact to ATP.

Belongs to the RecA family.

The protein resides in the cytoplasm. In terms of biological role, can catalyze the hydrolysis of ATP in the presence of single-stranded DNA, the ATP-dependent uptake of single-stranded DNA by duplex DNA, and the ATP-dependent hybridization of homologous single-stranded DNAs. It interacts with LexA causing its activation and leading to its autocatalytic cleavage. The chain is Protein RecA from Chlamydia trachomatis serovar L2 (strain ATCC VR-902B / DSM 19102 / 434/Bu).